Reading from the N-terminus, the 154-residue chain is Protein E6 (154 aa).

Zinc fingers lie at residues 30–66 (CVFC…CPRC) and 103–139 (CCKC…CLHC).

The protein belongs to the papillomaviridae E6 protein family. As to quaternary structure, forms homodimers. Interacts with ubiquitin-protein ligase UBE3A/E6-AP; this interaction stimulates UBE3A ubiquitin activity. Interacts with host TP53 and EP300; this interaction inhibits TP53 activity.

The protein localises to the host cytoplasm. Its subcellular location is the host nucleus. Functionally, plays a major role in the induction and maintenance of cellular transformation. E6 associates with host UBE3A/E6-AP ubiquitin-protein ligase and modulates its activity. Sequesters tumor suppressor TP53 in the host cytoplasm and modulates its activity by interacting with host EP300 that results in the reduction of TP53 acetylation and activation. In turn, apoptosis induced by DNA damage is inhibited. E6 also protects host keratinocytes from apoptosis by mediating the degradation of host BAK1. May also inhibit host immune response. This Homo sapiens (Human) protein is Protein E6.